The primary structure comprises 81 residues: Trefoil factor 3 (81 aa).

The signal sequence occupies residues 1 to 22 (METRALWLMLLVVLVAGSSGIA). Residues 31-74 (SQCMVPANVRVDCGYPSVTSEQCNNRGCCFDSSIPNVPWCFKPL) enclose the P-type domain. Cystine bridges form between cysteine 33–cysteine 59, cysteine 43–cysteine 58, and cysteine 53–cysteine 70.

As to quaternary structure, monomer. Homodimer; disulfide-linked. As to expression, expressed in goblet cells of the intestines and colon (at protein level). Expressed abundantly in goblet cells of intestine and colon, and at low levels in stomach. No expression in brain, lung, spleen, kidney, uterus, pancreas, liver, heart or thymus.

It is found in the secreted. The protein resides in the extracellular space. The protein localises to the extracellular matrix. It localises to the cytoplasm. In terms of biological role, involved in the maintenance and repair of the intestinal mucosa. Promotes the mobility of epithelial cells in healing processes (motogen). The protein is Trefoil factor 3 (Tff3) of Mus musculus (Mouse).